A 653-amino-acid polypeptide reads, in one-letter code: uncharacterized protein (653 aa).

2 consecutive transmembrane segments (helical) span residues 39-59 and 207-227; these read AMTT…LKLI and AVFV…AFTI. The 53-residue stretch at 225 to 277 folds into the HAMP domain; that stretch reads FTITKPIRELLTGVKNIASGDFHQRISLPFGGELGALIFNFNEMAERLEKYEQ. A PAS domain is found at 286–356; it reads EKAKLETLVS…PALNDIVRKN (71 aa). Residues 421-651 form the Histidine kinase domain; it reads NVSHELRTPL…CFFFDLIIAK (231 aa). The residue at position 424 (histidine 424) is a Phosphohistidine; by autocatalysis.

The protein localises to the plastid. It localises to the chloroplast membrane. The catalysed reaction is ATP + protein L-histidine = ADP + protein N-phospho-L-histidine.. This is an uncharacterized protein from Pyropia yezoensis (Susabi-nori).